A 198-amino-acid polypeptide reads, in one-letter code: Zinc finger protein 41 (198 aa).

Residues 1–12 are compositionally biased toward basic residues; it reads MEKPATRKKKSQ. Positions 1-56 are disordered; the sequence is MEKPATRKKKSQAPKEEAGAQKATVKGEKTSKGKKATKKPRKPRRPRKEPVLSPED. The span at 13-31 shows a compositional bias: basic and acidic residues; it reads APKEEAGAQKATVKGEKTS. A compositionally biased stretch (basic residues) spans 32–47; that stretch reads KGKKATKKPRKPRRPR. 4 consecutive C2H2-type zinc fingers follow at residues 87–109, 115–137, 143–165, and 171–193; these read YECGECGRIFKHKTDHIRHQRVH, FKCDQCGKTFRHSSDVTKHQRIH, FKCGECGKAFNCGSNLLKHQKTH, and YGCEECGKSFAYSSCLIRHRKRH.

The protein belongs to the krueppel C2H2-type zinc-finger protein family. In terms of tissue distribution, predominantly in the spermatocytes and spermatids of testes. It is also expressed in the fetus and embryonic stem cells at lower levels.

The protein resides in the nucleus. In terms of biological role, a putative DNA-binding regulatory protein associated with meiosis in spermatogenesis. This is Zinc finger protein 41 (Zfp41) from Mus musculus (Mouse).